The following is a 393-amino-acid chain: MKLAKRVASLTPSATLAITEKAKELKAAGHDVIGLGAGEPDFNTPQHILDAAIKAMNEGHTKYTPSGGLPALKEEIIKKFARDQGLDYEPAEVIVCVGAKHALYTLFQVLLDEGDEVIIPTPYWVSYPEQVKLAGGVPVYVEGLEQNHFKITPEQLKQAITPRTKAVIINSPSNPTGMIYTAEELKALGEVCLAHGVLIVSDEIYEKLTYGGAKHVSIAELSPELKAQTVIINGVSKSHSMTGWRIGYAAGPKDIIKAMTDLASHSTSNPTSIAQYAAIAAYSGPQEPVEQMRQAFEQRLNIIYDKLVQIPGFTCVKPQGAFYLFPNAREAAAMAGCRTVDEFVAALLEEAKVALVPGSGFGAPDNVRLSYATSLDALETAVERIHRFMEARA.

The L-aspartate site is built by glycine 38, tryptophan 124, and asparagine 174. Lysine 237 carries the post-translational modification N6-(pyridoxal phosphate)lysine.

It belongs to the class-I pyridoxal-phosphate-dependent aminotransferase family. In terms of assembly, homodimer. The cofactor is pyridoxal 5'-phosphate.

It localises to the cytoplasm. It carries out the reaction L-aspartate + 2-oxoglutarate = oxaloacetate + L-glutamate. The protein is Aspartate aminotransferase (aspC) of Geobacillus stearothermophilus (Bacillus stearothermophilus).